The following is a 111-amino-acid chain: Photosystem II reaction center Psb28 protein (111 aa).

This sequence belongs to the Psb28 family. In terms of assembly, part of the photosystem II complex.

It is found in the cellular thylakoid membrane. In Nostoc sp. (strain PCC 7120 / SAG 25.82 / UTEX 2576), this protein is Photosystem II reaction center Psb28 protein.